Here is a 554-residue protein sequence, read N- to C-terminus: Trimethyltridecatetraene synthase (554 aa).

The helical transmembrane segment at 1–21 (MSAAVALAVILAVYVVLRYIS) threads the bilayer. Cys464 contributes to the heme binding site.

It belongs to the cytochrome P450 family. The cofactor is heme.

The protein localises to the membrane. The catalysed reaction is (6E,10E)-geranyllinalool + reduced [NADPH--hemoprotein reductase] + O2 = (3E,7E)-4,8,12-trimethyltrideca 1,3,7,11-tetraene + but-3-en-2-one + oxidized [NADPH--hemoprotein reductase] + 2 H2O + H(+). It functions in the pathway secondary metabolite biosynthesis; terpenoid biosynthesis. Component of the volatile terpenes biosynthesis pathways. Converts mainly geranyllinalool to trimethyltridecatetraene (TMTT). This chain is Trimethyltridecatetraene synthase, found in Zea mays (Maize).